The chain runs to 317 residues: Putative ribose-phosphate pyrophosphokinase (317 aa).

Positions 211-224 (GRDVIVLDDEIAKG) are binding of phosphoribosylpyrophosphate.

The protein belongs to the ribose-phosphate pyrophosphokinase family.

The enzyme catalyses D-ribose 5-phosphate + ATP = 5-phospho-alpha-D-ribose 1-diphosphate + AMP + H(+). The protein is Putative ribose-phosphate pyrophosphokinase of Streptomyces coelicolor (strain ATCC BAA-471 / A3(2) / M145).